A 208-amino-acid polypeptide reads, in one-letter code: 3-demethoxyubiquinol 3-hydroxylase (208 aa).

Fe cation contacts are provided by Glu57, Glu87, His90, Glu139, Glu171, and His174.

It belongs to the COQ7 family. The cofactor is Fe cation.

It is found in the cell membrane. It carries out the reaction a 5-methoxy-2-methyl-3-(all-trans-polyprenyl)benzene-1,4-diol + AH2 + O2 = a 3-demethylubiquinol + A + H2O. The protein operates within cofactor biosynthesis; ubiquinone biosynthesis. Functionally, catalyzes the hydroxylation of 2-nonaprenyl-3-methyl-6-methoxy-1,4-benzoquinol during ubiquinone biosynthesis. In Nitrosomonas eutropha (strain DSM 101675 / C91 / Nm57), this protein is 3-demethoxyubiquinol 3-hydroxylase.